Reading from the N-terminus, the 365-residue chain is Gibberellin 20 oxidase 1-A (365 aa).

The region spanning 199–299 (GNDSIMRLNY…RKSLAFFLCP (101 aa)) is the Fe2OG dioxygenase domain. Residues His-224, Asp-226, and His-280 each contribute to the Fe cation site. The active site involves Arg-290.

It belongs to the iron/ascorbate-dependent oxidoreductase family. GA20OX subfamily. Fe cation is required as a cofactor. Requires L-ascorbate as cofactor. In terms of tissue distribution, expressed in nodes and the ear of the elongating stem.

It catalyses the reaction gibberellin A12 + 2 2-oxoglutarate + 3 O2 + H(+) = gibberellin A9 + 2 succinate + 3 CO2 + 2 H2O. The enzyme catalyses gibberellin A53 + 2 2-oxoglutarate + 3 O2 + H(+) = gibberellin A20 + 2 succinate + 3 CO2 + 2 H2O. In terms of biological role, key oxidase enzyme in the biosynthesis of gibberellin that catalyzes the conversion of GA12 and GA53 to GA9 and GA20 respectively, via a three-step oxidation at C-20 of the GA skeleton. The chain is Gibberellin 20 oxidase 1-A (GA20ox1A) from Triticum aestivum (Wheat).